A 231-amino-acid polypeptide reads, in one-letter code: 7-cyano-7-deazaguanine synthase (231 aa).

Residue 8 to 18 (FSGGQDSTTCL) participates in ATP binding. Zn(2+)-binding residues include Cys188, Cys197, Cys200, and Cys203.

It belongs to the QueC family. Requires Zn(2+) as cofactor.

It carries out the reaction 7-carboxy-7-deazaguanine + NH4(+) + ATP = 7-cyano-7-deazaguanine + ADP + phosphate + H2O + H(+). Its pathway is purine metabolism; 7-cyano-7-deazaguanine biosynthesis. Its function is as follows. Catalyzes the ATP-dependent conversion of 7-carboxy-7-deazaguanine (CDG) to 7-cyano-7-deazaguanine (preQ(0)). The polypeptide is 7-cyano-7-deazaguanine synthase (Escherichia coli (strain ATCC 8739 / DSM 1576 / NBRC 3972 / NCIMB 8545 / WDCM 00012 / Crooks)).